Consider the following 284-residue polypeptide: Co-chaperone protein DjlA (284 aa).

The Periplasmic portion of the chain corresponds to 1 to 6 (MHIFGK). Residues 7-30 (ILGAFFGLLLGGPFGLLFGLFIGH) form a helical membrane-spanning segment. Topologically, residues 31–284 (QFDKARRLSQ…DLIKKVKGFK (254 aa)) are cytoplasmic. The J domain occupies 218-284 (DAYKILDVSP…DLIKKVKGFK (67 aa)).

As to quaternary structure, homodimer.

The protein resides in the cell inner membrane. In terms of biological role, regulatory DnaK co-chaperone. Direct interaction between DnaK and DjlA is needed for the induction of the wcaABCDE operon, involved in the synthesis of a colanic acid polysaccharide capsule, possibly through activation of the RcsB/RcsC phosphotransfer signaling pathway. The colanic acid capsule may help the bacterium survive conditions outside the host. This is Co-chaperone protein DjlA from Vibrio parahaemolyticus serotype O3:K6 (strain RIMD 2210633).